A 669-amino-acid chain; its full sequence is Elongation factor G-like protein (669 aa).

The tr-type G domain maps to 7-279 (ESLRNVAIVG…VLIKEAPDPS (273 aa)). Positions 16–23 (GPYGSGKT) are G1. Residue 16–23 (GPYGSGKT) participates in GTP binding. A G2 region spans residues 59-63 (QMSVE). The tract at residues 80 to 83 (DCPG) is G3. GTP-binding positions include 80-84 (DCPGS) and 134-137 (NKMD). The interval 134-137 (NKMD) is G4. The segment at 257-259 (AAE) is G5.

The protein belongs to the TRAFAC class translation factor GTPase superfamily. Classic translation factor GTPase family. EF-G/EF-2 subfamily.

The chain is Elongation factor G-like protein from Synechocystis sp. (strain ATCC 27184 / PCC 6803 / Kazusa).